The chain runs to 428 residues: Phosphomethylpyrimidine synthase (428 aa).

Substrate-binding positions include Asn-66, Met-94, Tyr-123, His-162, 184 to 186 (SRG), 225 to 228 (DALR), and Glu-264. Zn(2+) is bound at residue His-268. A substrate-binding site is contributed by Tyr-291. Residue His-332 coordinates Zn(2+). Positions 408, 411, and 415 each coordinate [4Fe-4S] cluster.

Belongs to the ThiC family. It depends on [4Fe-4S] cluster as a cofactor.

It carries out the reaction 5-amino-1-(5-phospho-beta-D-ribosyl)imidazole + S-adenosyl-L-methionine = 4-amino-2-methyl-5-(phosphooxymethyl)pyrimidine + CO + 5'-deoxyadenosine + formate + L-methionine + 3 H(+). The protein operates within cofactor biosynthesis; thiamine diphosphate biosynthesis. Its function is as follows. Catalyzes the synthesis of the hydroxymethylpyrimidine phosphate (HMP-P) moiety of thiamine from aminoimidazole ribotide (AIR) in a radical S-adenosyl-L-methionine (SAM)-dependent reaction. The chain is Phosphomethylpyrimidine synthase from Sulfolobus acidocaldarius (strain ATCC 33909 / DSM 639 / JCM 8929 / NBRC 15157 / NCIMB 11770).